A 430-amino-acid polypeptide reads, in one-letter code: Serine--tRNA ligase (430 aa).

237–239 serves as a coordination point for L-serine; the sequence is TAE. Residue 268 to 270 coordinates ATP; that stretch reads RSE. Glutamate 291 is a binding site for L-serine. 355–358 is an ATP binding site; that stretch reads EISS. Position 391 (serine 391) interacts with L-serine.

Belongs to the class-II aminoacyl-tRNA synthetase family. Type-1 seryl-tRNA synthetase subfamily. In terms of assembly, homodimer. The tRNA molecule binds across the dimer.

The protein resides in the cytoplasm. It catalyses the reaction tRNA(Ser) + L-serine + ATP = L-seryl-tRNA(Ser) + AMP + diphosphate + H(+). It carries out the reaction tRNA(Sec) + L-serine + ATP = L-seryl-tRNA(Sec) + AMP + diphosphate + H(+). It functions in the pathway aminoacyl-tRNA biosynthesis; selenocysteinyl-tRNA(Sec) biosynthesis; L-seryl-tRNA(Sec) from L-serine and tRNA(Sec): step 1/1. Functionally, catalyzes the attachment of serine to tRNA(Ser). Is also able to aminoacylate tRNA(Sec) with serine, to form the misacylated tRNA L-seryl-tRNA(Sec), which will be further converted into selenocysteinyl-tRNA(Sec). The sequence is that of Serine--tRNA ligase from Salmonella paratyphi C (strain RKS4594).